Reading from the N-terminus, the 293-residue chain is MDIALALKAVILGIVEGLTEFLPISSTGHLILAGQLLDFNDEKGKIFEIVIQFGAILAVCWEFRQRIGTVISGLASDVKSQRFAVNVIVATIPAIVLALVFGKWIKAHLFNPITVATAFIIGGVVILLAEWREARRGTVSAPQGNALLEAAKAGAPRIESVDDLNWRDALKVGLAQCFALVPGTSRSGATIIGGMLFGLSRQVATEFSFFLAIPVIFGATVYELYKARALLSADDLGIFAVGFVFAFLSAFLCVRWLLRFVATHDFKPFAWYRIAFGIIVLLTAWTGVISWHA.

The next 8 helical transmembrane spans lie at 3 to 23, 43 to 63, 85 to 105, 109 to 129, 178 to 198, 203 to 223, 238 to 258, and 269 to 289; these read IALALKAVILGIVEGLTEFLP, KGKIFEIVIQFGAILAVCWEF, VNVIVATIPAIVLALVFGKWI, LFNPITVATAFIIGGVVILLA, FALVPGTSRSGATIIGGMLFG, VATEFSFFLAIPVIFGATVYE, IFAVGFVFAFLSAFLCVRWLL, and FAWYRIAFGIIVLLTAWTGVI.

Belongs to the UppP family.

The protein localises to the cell inner membrane. The catalysed reaction is di-trans,octa-cis-undecaprenyl diphosphate + H2O = di-trans,octa-cis-undecaprenyl phosphate + phosphate + H(+). Its function is as follows. Catalyzes the dephosphorylation of undecaprenyl diphosphate (UPP). Confers resistance to bacitracin. In Cupriavidus metallidurans (strain ATCC 43123 / DSM 2839 / NBRC 102507 / CH34) (Ralstonia metallidurans), this protein is Undecaprenyl-diphosphatase.